We begin with the raw amino-acid sequence, 78 residues long: RTX-VII (78 aa).

Positions Met-1 to Ala-22 are cleaved as a signal peptide. The propeptide occupies Glu-23 to Arg-40. 4 disulfides stabilise this stretch: Cys-42-Cys-58, Cys-47-Cys-63, Cys-57-Cys-73, and Cys-65-Cys-71. Arg-76 carries the arginine amide modification.

In terms of tissue distribution, expressed by the venom gland.

It is found in the secreted. Agonist of rat Nav1.3/SCN3A. This toxin increases the peak current amplitude, and potently inhibits the fast inactivation of the channel (EC(50)=120 nM). The inhibition of fast inactivation is voltage-independent (depolarizing voltages ranging from 220 mV to 130 mV). The toxin might bind to the domain IV of the Nav1.3 channel, while domain II might not participate in interacting with the toxin but could determine the efficacy of RTX-VII. In vivo, when intracerebroventricularly injected into mice, the toxin causes involuntary body twitching (seizure-like symptoms). This Macrothele raveni (Funnel-web spider) protein is RTX-VII.